Consider the following 410-residue polypeptide: Elongation factor Tu, apicoplast (410 aa).

One can recognise a tr-type G domain in the interval 10-214; sequence KQHINLGTIG…QIIDNIIIPT (205 aa). The G1 stretch occupies residues 19 to 26; it reads GHVDHGKT. 19 to 26 serves as a coordination point for GTP; it reads GHVDHGKT. Thr26 is a Mg(2+) binding site. The tract at residues 60 to 64 is G2; the sequence is GITIN. The interval 81 to 84 is G3; sequence DCPG. GTP-binding positions include 81–85 and 136–139; these read DCPGH and NKED. Residues 136 to 139 are G4; it reads NKED. A G5 region spans residues 174–176; the sequence is SAL.

It belongs to the TRAFAC class translation factor GTPase superfamily. Classic translation factor GTPase family. EF-Tu/EF-1A subfamily.

It is found in the plastid. It localises to the apicoplast. The catalysed reaction is GTP + H2O = GDP + phosphate + H(+). GTP hydrolase that promotes the GTP-dependent binding of aminoacyl-tRNA to the A-site of ribosomes during protein biosynthesis. The sequence is that of Elongation factor Tu, apicoplast (tufA) from Plasmodium falciparum (isolate 3D7).